The primary structure comprises 226 residues: Phosphoglycolate phosphatase (226 aa).

Asp9 acts as the Nucleophile in catalysis. Asp9 and Asp11 together coordinate Mg(2+). Residue Lys150 participates in substrate binding. Mg(2+) contacts are provided by Asp173 and Asp177.

The protein belongs to the archaeal SPP-like hydrolase family. Mg(2+) is required as a cofactor.

It catalyses the reaction 2-phosphoglycolate + H2O = glycolate + phosphate. In terms of biological role, catalyzes the dephosphorylation of 2-phosphoglycolate. This chain is Phosphoglycolate phosphatase, found in Methanococcoides burtonii (strain DSM 6242 / NBRC 107633 / OCM 468 / ACE-M).